We begin with the raw amino-acid sequence, 458 residues long: Mannan endo-1,6-alpha-mannosidase DFG5 (458 aa).

The first 26 residues, Met1 to Ala26, serve as a signal peptide directing secretion. Residues Asn89, Asn114, Asn138, Asn208, Asn231, Asn245, Asn270, Asn273, and Asn417 are each glycosylated (N-linked (GlcNAc...) asparagine). Residues Pro399–Ser418 form a disordered region. Residue Gly437 is the site of GPI-anchor amidated glycine attachment. The propeptide at Ala438–Phe458 is removed in mature form.

Belongs to the glycosyl hydrolase 76 family. N-glycosylated.

The protein localises to the cell membrane. The catalysed reaction is Random hydrolysis of (1-&gt;6)-alpha-D-mannosidic linkages in unbranched (1-&gt;6)-mannans.. Functionally, required for normal synthesis of the cell wall. The polypeptide is Mannan endo-1,6-alpha-mannosidase DFG5 (DFG5) (Saccharomyces cerevisiae (strain ATCC 204508 / S288c) (Baker's yeast)).